Reading from the N-terminus, the 336-residue chain is Pyridoxal 5'-phosphate synthase subunit PdxS (336 aa).

Aspartate 33 is a binding site for D-ribose 5-phosphate. The active-site Schiff-base intermediate with D-ribose 5-phosphate is the lysine 90. Residue glycine 162 coordinates D-ribose 5-phosphate. Arginine 174 lines the D-glyceraldehyde 3-phosphate pocket. D-ribose 5-phosphate-binding positions include glycine 260 and 281-282; that span reads GS.

This sequence belongs to the PdxS/SNZ family. As to quaternary structure, in the presence of PdxT, forms a dodecamer of heterodimers.

It catalyses the reaction aldehydo-D-ribose 5-phosphate + D-glyceraldehyde 3-phosphate + L-glutamine = pyridoxal 5'-phosphate + L-glutamate + phosphate + 3 H2O + H(+). Its pathway is cofactor biosynthesis; pyridoxal 5'-phosphate biosynthesis. Functionally, catalyzes the formation of pyridoxal 5'-phosphate from ribose 5-phosphate (RBP), glyceraldehyde 3-phosphate (G3P) and ammonia. The ammonia is provided by the PdxT subunit. Can also use ribulose 5-phosphate and dihydroxyacetone phosphate as substrates, resulting from enzyme-catalyzed isomerization of RBP and G3P, respectively. The chain is Pyridoxal 5'-phosphate synthase subunit PdxS from Picrophilus torridus (strain ATCC 700027 / DSM 9790 / JCM 10055 / NBRC 100828 / KAW 2/3).